The primary structure comprises 74 residues: Kappa-stichotoxin-Sgt4a (74 aa).

The N-terminal stretch at 1–22 (MKFQVIAAVLLIEFCLCVVVTA) is a signal peptide. Residues 23–39 (RMELQDVEDVENGFQKR) constitute a propeptide that is removed on maturation. The region spanning 42-74 (CIDTIPQSRCTAFQCKHSMKYRLSFCRKTCGTC) is the ShKT domain. 3 disulfides stabilise this stretch: C42–C74, C51–C67, and C56–C71.

The protein belongs to the sea anemone type 1 potassium channel toxin family. Type 1a subfamily.

The protein resides in the secreted. It localises to the nematocyst. Functionally, inhibits voltage-gated potassium channels (Kv) with higher potency for Kv1.1/KCNA1 and Kv1.3/KCNA3. This chain is Kappa-stichotoxin-Sgt4a, found in Stichodactyla gigantea (Giant carpet anemone).